A 558-amino-acid polypeptide reads, in one-letter code: Energy-dependent translational throttle protein EttA (558 aa).

2 consecutive ABC transporter domains span residues 6–256 (YTMK…AVQG) and 322–552 (VEVD…RVTH). 38 to 45 (GPNGAGKS) is a binding site for ATP. The interval 94-136 (GDIKIKLDRFNEVAELMATDYTDELMEEMGRLQEELDHADAWD) is arm. Residues 239-320 (GNYSTYLEKK…IPVGPRLGNV (82 aa)) form a ptIM region. 354–361 (GPNGVGKT) lines the ATP pocket.

Belongs to the ABC transporter superfamily. ABCF family. Translational throttle EttA subfamily. Monomer. Probably contacts ribosomal proteins L1, L5, L33 and S7, the 16S and 23S rRNA and the P-site containing tRNA(fMet).

Its subcellular location is the cytoplasm. The enzyme catalyses ATP + H2O = ADP + phosphate + H(+). In terms of biological role, a translation factor that gates the progression of the 70S ribosomal initiation complex (IC, containing tRNA(fMet) in the P-site) into the translation elongation cycle by using a mechanism sensitive to the ATP/ADP ratio. Binds to the 70S ribosome E-site where it modulates the state of the translating ribosome during subunit translocation. ATP hydrolysis probably frees it from the ribosome, which can enter the elongation phase. The chain is Energy-dependent translational throttle protein EttA from Mycobacterium tuberculosis (strain CDC 1551 / Oshkosh).